Reading from the N-terminus, the 305-residue chain is Aspartate carbamoyltransferase catalytic subunit (305 aa).

Carbamoyl phosphate contacts are provided by R52 and T53. K80 contacts L-aspartate. Residues R102, H132, and Q135 each coordinate carbamoyl phosphate. L-aspartate contacts are provided by R165 and R217. The carbamoyl phosphate site is built by A258 and P259.

Belongs to the aspartate/ornithine carbamoyltransferase superfamily. ATCase family. Heterododecamer (2C3:3R2) of six catalytic PyrB chains organized as two trimers (C3), and six regulatory PyrI chains organized as three dimers (R2).

The catalysed reaction is carbamoyl phosphate + L-aspartate = N-carbamoyl-L-aspartate + phosphate + H(+). The protein operates within pyrimidine metabolism; UMP biosynthesis via de novo pathway; (S)-dihydroorotate from bicarbonate: step 2/3. Functionally, catalyzes the condensation of carbamoyl phosphate and aspartate to form carbamoyl aspartate and inorganic phosphate, the committed step in the de novo pyrimidine nucleotide biosynthesis pathway. The sequence is that of Aspartate carbamoyltransferase catalytic subunit from Latilactobacillus sakei subsp. sakei (strain 23K) (Lactobacillus sakei subsp. sakei).